The primary structure comprises 331 residues: Ketol-acid reductoisomerase (NADP(+)) (331 aa).

In terms of domain architecture, KARI N-terminal Rossmann spans 2–181 (LEKYYDKDAD…GATRAVVFET (180 aa)). NADP(+) contacts are provided by residues 25–28 (YGSQ), Arg48, Ser52, and 82–85 (DEQQ). His107 is an active-site residue. Gly133 provides a ligand contact to NADP(+). A KARI C-terminal knotted domain is found at 182 to 327 (SFREETETDL…KEIRATMPQF (146 aa)). Mg(2+) contacts are provided by Asp190, Glu194, Glu226, and Glu230. A substrate-binding site is contributed by Ser251.

Belongs to the ketol-acid reductoisomerase family. Requires Mg(2+) as cofactor.

It carries out the reaction (2R)-2,3-dihydroxy-3-methylbutanoate + NADP(+) = (2S)-2-acetolactate + NADPH + H(+). The catalysed reaction is (2R,3R)-2,3-dihydroxy-3-methylpentanoate + NADP(+) = (S)-2-ethyl-2-hydroxy-3-oxobutanoate + NADPH + H(+). It functions in the pathway amino-acid biosynthesis; L-isoleucine biosynthesis; L-isoleucine from 2-oxobutanoate: step 2/4. The protein operates within amino-acid biosynthesis; L-valine biosynthesis; L-valine from pyruvate: step 2/4. Functionally, involved in the biosynthesis of branched-chain amino acids (BCAA). Catalyzes an alkyl-migration followed by a ketol-acid reduction of (S)-2-acetolactate (S2AL) to yield (R)-2,3-dihydroxy-isovalerate. In the isomerase reaction, S2AL is rearranged via a Mg-dependent methyl migration to produce 3-hydroxy-3-methyl-2-ketobutyrate (HMKB). In the reductase reaction, this 2-ketoacid undergoes a metal-dependent reduction by NADPH to yield (R)-2,3-dihydroxy-isovalerate. In Methanospirillum hungatei JF-1 (strain ATCC 27890 / DSM 864 / NBRC 100397 / JF-1), this protein is Ketol-acid reductoisomerase (NADP(+)).